A 548-amino-acid chain; its full sequence is 1,3-beta-glucanosyltransferase gel4 (548 aa).

Residues 1-25 (MKFVYAAAGASLVGSALATLPVIEA) form the signal peptide. Residues asparagine 51 and asparagine 69 are each glycosylated (N-linked (GlcNAc...) asparagine). Cysteine 88 and cysteine 117 are oxidised to a cystine. (1,3-beta-D-glucosyl)n contacts are provided by residues tyrosine 106, 133 to 141 (SAPSESINR), asparagine 174, and glutamate 175. Glutamate 175 acts as the Proton donor in catalysis. N-linked (GlcNAc...) asparagine glycosylation is present at asparagine 181. Residues aspartate 217 and arginine 222 each contribute to the (1,3-beta-D-glucosyl)n site. Cystine bridges form between cysteine 231–cysteine 364, cysteine 249–cysteine 280, cysteine 386–cysteine 437, cysteine 395–cysteine 461, and cysteine 414–cysteine 419. Glutamate 277 acts as the Nucleophile in catalysis. A (1,3-beta-D-glucosyl)n-binding site is contributed by tyrosine 309. N-linked (GlcNAc...) asparagine glycosylation is present at asparagine 425. Alanine 519 carries the GPI-like-anchor amidated alanine lipid modification. The propeptide at 520-548 (SPMAVKVGNWQFGAYIATALFAGVGMLVL) is removed in mature form.

It belongs to the glycosyl hydrolase 72 family. Post-translationally, the GPI-like anchor contains a phosphoceramide lipid group.

The protein localises to the cell membrane. Functionally, splits internally a 1,3-beta-glucan molecule and transfers the newly generated reducing end (the donor) to the non-reducing end of another 1,3-beta-glucan molecule (the acceptor) forming a 1,3-beta linkage, resulting in the elongation of 1,3-beta-glucan chains in the cell wall. Involved in cell wall morphogenesis. The chain is 1,3-beta-glucanosyltransferase gel4 (gel4) from Aspergillus fumigatus (strain ATCC MYA-4609 / CBS 101355 / FGSC A1100 / Af293) (Neosartorya fumigata).